Reading from the N-terminus, the 464-residue chain is Cysteine--tRNA ligase (464 aa).

A Zn(2+)-binding site is contributed by cysteine 27. A 'HIGH' region motif is present at residues 29-39 (PTVYNFFHIGN). Positions 207, 232, and 236 each coordinate Zn(2+). The 'KMSKS' region motif lies at 264-268 (KMSKS). An ATP-binding site is contributed by lysine 267.

This sequence belongs to the class-I aminoacyl-tRNA synthetase family. Monomer. Zn(2+) serves as cofactor.

The protein localises to the cytoplasm. It carries out the reaction tRNA(Cys) + L-cysteine + ATP = L-cysteinyl-tRNA(Cys) + AMP + diphosphate. This chain is Cysteine--tRNA ligase, found in Clostridium acetobutylicum (strain ATCC 824 / DSM 792 / JCM 1419 / IAM 19013 / LMG 5710 / NBRC 13948 / NRRL B-527 / VKM B-1787 / 2291 / W).